A 211-amino-acid polypeptide reads, in one-letter code: Small ribosomal subunit protein uS3 (211 aa).

The KH type-2 domain occupies 16–85; that stretch reads IDEYFKTKLV…NPQIEVKQVE (70 aa).

It belongs to the universal ribosomal protein uS3 family. In terms of assembly, part of the 30S ribosomal subunit.

Functionally, binds the lower part of the 30S subunit head. The polypeptide is Small ribosomal subunit protein uS3 (Methanococcus maripaludis (strain C7 / ATCC BAA-1331)).